The following is a 435-amino-acid chain: DMATS-type prenyltransferase fscG (435 aa).

Positions 111, 193, 195, 259, 261, 263, 352, and 423 each coordinate dimethylallyl diphosphate.

The protein belongs to the tryptophan dimethylallyltransferase family.

It participates in secondary metabolite biosynthesis. DMATS-type prenyltransferase; part of the fragmented gene cluster that mediates the biosynthesis of fusarochromene, a tryptophan-derived metabolite closely related to a group of mycotoxins including fusarochromanone. Within the pathway, fscG catalyzes the prenylation of the primary alcohol produced by fscA which is necessary for the formation of the chromene ring by the oxidoreductase fscI. The first step of the pathway is the epimerization of L-tryptophan to D-tryptophan in the presence of the NRPS-like tryptophan epimerase fscC. D-tryptophan is subsequently hydroxylated by the tryptophan 6-hydroxylase fscE to yield 6-hydroxytryptophan. The pyrrole ring undergoes cleavaged by the tryptophan 2,3-dioxygenase fscD and is finally converted to 4-hydroxykyrunenine by the hydrolase fscH. The NRPS-like oxidoreductase fscA reduces the carboxyl group to primary alcohol and the DMATS-type prenyltransferase fscG performs prenylation, followed by the formation of a chromene ring catalyzed by the oxidoreductase fscI, which leads to desacetylfusarochromene. Epoxidation by fscF and rearrangement reactions of chromene double bonds convert compound desacetylfusarochromene to fusarochromanones. Although specific acetyltransferases were not found near the fsc gene cluster, several predicted enzymes containing the N-acetyltransferase superfamily domain are present in the genome of F.equiseti. These predicted enzymes may have the potential to convert desacetylfusarochromene to fusarochromene. This is DMATS-type prenyltransferase fscG from Fusarium equiseti (Fusarium scirpi).